The following is a 31-amino-acid chain: Photosystem II reaction center protein T (31 aa).

A helical transmembrane segment spans residues 3-23 (AFSYTLLMALAAVTLFFAVAF).

Belongs to the PsbT family. As to quaternary structure, PSII is composed of 1 copy each of membrane proteins PsbA, PsbB, PsbC, PsbD, PsbE, PsbF, PsbH, PsbI, PsbJ, PsbK, PsbL, PsbM, PsbT, PsbX, PsbY, Psb30/Ycf12, peripheral proteins PsbO, CyanoQ (PsbQ), PsbU, PsbV and a large number of cofactors. It forms dimeric complexes.

It is found in the cellular thylakoid membrane. Functionally, found at the monomer-monomer interface of the photosystem II (PS II) dimer, plays a role in assembly and dimerization of PSII. PSII is a light-driven water plastoquinone oxidoreductase, using light energy to abstract electrons from H(2)O, generating a proton gradient subsequently used for ATP formation. This Prochlorococcus marinus (strain MIT 9211) protein is Photosystem II reaction center protein T.